The primary structure comprises 175 residues: Sec-independent protein translocase protein TatB (175 aa).

The chain crosses the membrane as a helical span at residues 1-21 (MLDLGLSKMALIGVVALVVLG). Residues 99-115 (GDPAAADASGGLGATSD) are compositionally biased toward low complexity. The segment at 99–118 (GDPAAADASGGLGATSDEPS) is disordered.

It belongs to the TatB family. The Tat system comprises two distinct complexes: a TatABC complex, containing multiple copies of TatA, TatB and TatC subunits, and a separate TatA complex, containing only TatA subunits. Substrates initially bind to the TatABC complex, which probably triggers association of the separate TatA complex to form the active translocon.

It localises to the cell inner membrane. Functionally, part of the twin-arginine translocation (Tat) system that transports large folded proteins containing a characteristic twin-arginine motif in their signal peptide across membranes. Together with TatC, TatB is part of a receptor directly interacting with Tat signal peptides. TatB may form an oligomeric binding site that transiently accommodates folded Tat precursor proteins before their translocation. The chain is Sec-independent protein translocase protein TatB from Burkholderia thailandensis (strain ATCC 700388 / DSM 13276 / CCUG 48851 / CIP 106301 / E264).